A 143-amino-acid chain; its full sequence is Small ribosomal subunit protein bS6 (143 aa).

The interval 97–143 is disordered; that stretch reads DTEQSLIMKSKDEKGDKHERSERRRRDDEEGDVPAATDTDGDNAEAA. Basic and acidic residues predominate over residues 105–124; that stretch reads KSKDEKGDKHERSERRRRDD.

The protein belongs to the bacterial ribosomal protein bS6 family.

Functionally, binds together with bS18 to 16S ribosomal RNA. In Xanthomonas oryzae pv. oryzae (strain MAFF 311018), this protein is Small ribosomal subunit protein bS6.